A 1057-amino-acid chain; its full sequence is Carbamoyl phosphate synthase large chain (1057 aa).

The tract at residues 1–401 (MPKRNDIKTI…SLLKAIRSLE (401 aa)) is carboxyphosphate synthetic domain. Arginine 129, arginine 169, glycine 175, glycine 176, lysine 208, isoleucine 210, glutamate 215, glycine 241, isoleucine 242, histidine 243, glutamine 284, and glutamate 298 together coordinate ATP. An ATP-grasp 1 domain is found at 133 to 327 (RTLMNDLNVP…IAKLAAKIAV (195 aa)). Mg(2+)-binding residues include glutamine 284, glutamate 298, and asparagine 300. Glutamine 284, glutamate 298, and asparagine 300 together coordinate Mn(2+). The oligomerization domain stretch occupies residues 402–546 (YGVHHLGLPN…YGTYETENES (145 aa)). A carbamoyl phosphate synthetic domain region spans residues 547-929 (IVTDKEKILV…ALFKGLTGSG (383 aa)). An ATP-grasp 2 domain is found at 671-861 (EALLRKINVP…MAQLAMRAII (191 aa)). Arginine 707, arginine 746, leucine 748, glutamate 752, glycine 777, valine 778, histidine 779, serine 780, glutamine 820, and glutamate 832 together coordinate ATP. Positions 820, 832, and 834 each coordinate Mg(2+). Positions 820, 832, and 834 each coordinate Mn(2+). Residues 930–1057 (VEVKDHGTVL…ESMTFTMRQM (128 aa)) enclose the MGS-like domain. The allosteric domain stretch occupies residues 930 to 1057 (VEVKDHGTVL…ESMTFTMRQM (128 aa)).

This sequence belongs to the CarB family. As to quaternary structure, composed of two chains; the small (or glutamine) chain promotes the hydrolysis of glutamine to ammonia, which is used by the large (or ammonia) chain to synthesize carbamoyl phosphate. Tetramer of heterodimers (alpha,beta)4. Mg(2+) serves as cofactor. The cofactor is Mn(2+).

It catalyses the reaction hydrogencarbonate + L-glutamine + 2 ATP + H2O = carbamoyl phosphate + L-glutamate + 2 ADP + phosphate + 2 H(+). It carries out the reaction hydrogencarbonate + NH4(+) + 2 ATP = carbamoyl phosphate + 2 ADP + phosphate + 2 H(+). It participates in amino-acid biosynthesis; L-arginine biosynthesis; carbamoyl phosphate from bicarbonate: step 1/1. It functions in the pathway pyrimidine metabolism; UMP biosynthesis via de novo pathway; (S)-dihydroorotate from bicarbonate: step 1/3. In terms of biological role, large subunit of the glutamine-dependent carbamoyl phosphate synthetase (CPSase). CPSase catalyzes the formation of carbamoyl phosphate from the ammonia moiety of glutamine, carbonate, and phosphate donated by ATP, constituting the first step of 2 biosynthetic pathways, one leading to arginine and/or urea and the other to pyrimidine nucleotides. The large subunit (synthetase) binds the substrates ammonia (free or transferred from glutamine from the small subunit), hydrogencarbonate and ATP and carries out an ATP-coupled ligase reaction, activating hydrogencarbonate by forming carboxy phosphate which reacts with ammonia to form carbamoyl phosphate. This chain is Carbamoyl phosphate synthase large chain, found in Staphylococcus aureus (strain MRSA252).